Reading from the N-terminus, the 210-residue chain is Urease accessory protein UreG (210 aa).

14-21 contributes to the GTP binding site; sequence GPVGSGKT.

Belongs to the SIMIBI class G3E GTPase family. UreG subfamily. In terms of assembly, homodimer. UreD, UreF and UreG form a complex that acts as a GTP-hydrolysis-dependent molecular chaperone, activating the urease apoprotein by helping to assemble the nickel containing metallocenter of UreC. The UreE protein probably delivers the nickel.

It localises to the cytoplasm. Functionally, facilitates the functional incorporation of the urease nickel metallocenter. This process requires GTP hydrolysis, probably effectuated by UreG. This Rhodopseudomonas palustris (strain BisB5) protein is Urease accessory protein UreG.